The chain runs to 344 residues: Ribosomal RNA large subunit methyltransferase Cfr (344 aa).

The active-site Proton acceptor is E90. The Radical SAM core domain maps to K97–E330. C104 and C335 are joined by a disulfide. The [4Fe-4S] cluster site is built by C111, C115, and C118. S-adenosyl-L-methionine-binding positions include G157 to E158, S188, S211 to H213, and N292. C335 serves as the catalytic S-methylcysteine intermediate.

It belongs to the radical SAM superfamily. RlmN family. Cfr subfamily. The cofactor is [4Fe-4S] cluster.

It is found in the cytoplasm. The enzyme catalyses adenosine(2503) in 23S rRNA + 2 reduced [2Fe-2S]-[ferredoxin] + 2 S-adenosyl-L-methionine = 8-methyladenosine(2503) in 23S rRNA + 5'-deoxyadenosine + L-methionine + 2 oxidized [2Fe-2S]-[ferredoxin] + S-adenosyl-L-homocysteine. Specifically methylates position 8 of adenine 2503 in 23S rRNA. Confers resistance to some classes of antibiotics. This is Ribosomal RNA large subunit methyltransferase Cfr from Clostridium botulinum (strain Loch Maree / Type A3).